The primary structure comprises 81 residues: Putative membrane protein insertion efficiency factor (81 aa).

The interval 61-81 (NDGGYDPVPPAPSSRTSSIAE) is disordered.

It belongs to the UPF0161 family.

It is found in the cell inner membrane. Functionally, could be involved in insertion of integral membrane proteins into the membrane. This is Putative membrane protein insertion efficiency factor from Pseudomonas putida (strain ATCC 47054 / DSM 6125 / CFBP 8728 / NCIMB 11950 / KT2440).